The primary structure comprises 314 residues: Protoheme IX farnesyltransferase (314 aa).

Helical transmembrane passes span 31 to 51 (VMSL…GHFH), 52 to 72 (PVLA…SGAL), 119 to 139 (ILVN…YVVI), 152 to 172 (IVIG…AVTG), 179 to 199 (LLLF…LALF), 225 to 245 (ILLY…LGYF), 247 to 267 (AVYG…AINV), and 284 to 304 (FAFS…EVVF).

It belongs to the UbiA prenyltransferase family. Protoheme IX farnesyltransferase subfamily.

Its subcellular location is the cell inner membrane. It carries out the reaction heme b + (2E,6E)-farnesyl diphosphate + H2O = Fe(II)-heme o + diphosphate. Its pathway is porphyrin-containing compound metabolism; heme O biosynthesis; heme O from protoheme: step 1/1. In terms of biological role, converts heme B (protoheme IX) to heme O by substitution of the vinyl group on carbon 2 of heme B porphyrin ring with a hydroxyethyl farnesyl side group. The sequence is that of Protoheme IX farnesyltransferase from Bradyrhizobium diazoefficiens (strain JCM 10833 / BCRC 13528 / IAM 13628 / NBRC 14792 / USDA 110).